The following is a 710-amino-acid chain: Elongation factor G (710 aa).

The 290-residue stretch at 8 to 297 (ERVRNIGIAA…AVVDYLPSPI (290 aa)) folds into the tr-type G domain. Residues 17-24 (AHIDAGKT), 96-100 (DTPGH), and 150-153 (NKMD) contribute to the GTP site.

It belongs to the TRAFAC class translation factor GTPase superfamily. Classic translation factor GTPase family. EF-G/EF-2 subfamily.

It localises to the cytoplasm. In terms of biological role, catalyzes the GTP-dependent ribosomal translocation step during translation elongation. During this step, the ribosome changes from the pre-translocational (PRE) to the post-translocational (POST) state as the newly formed A-site-bound peptidyl-tRNA and P-site-bound deacylated tRNA move to the P and E sites, respectively. Catalyzes the coordinated movement of the two tRNA molecules, the mRNA and conformational changes in the ribosome. This chain is Elongation factor G, found in Synechococcus sp. (strain JA-3-3Ab) (Cyanobacteria bacterium Yellowstone A-Prime).